The primary structure comprises 96 residues: Exopolysaccharide production repressor protein (96 aa).

Transmembrane regions (helical) follow at residues 6 to 26 (FVVS…FLTG) and 35 to 55 (TLLC…FLVW). The tract at residues 64–96 (LSPGQLPADPTNDEKQTGKLSLRRLNRPPHFNS) is disordered.

It localises to the cell membrane. The protein operates within glycan metabolism; exopolysaccharide biosynthesis. Inhibition of exopolysaccharide synthesis (EPS) and nodulation ability (NOD). The sequence is that of Exopolysaccharide production repressor protein (exoX) from Sinorhizobium fredii (strain NBRC 101917 / NGR234).